The primary structure comprises 145 residues: Histone H2B.1, sperm (145 aa).

The tract at residues 1–52 (MPSQKSPTKRSPTKRSPTKRSPQKGGKGGKGAKRGGKAGKRRRGVQVKRRRR) is disordered. 4 short sequence motifs (SPKK motif) span residues 6–9 (SPTK), 11–14 (SPTK), 16–19 (SPTK), and 21–24 (SPQK). Composition is skewed to basic residues over residues 7–22 (PTKR…KRSP) and 30–52 (KGAK…RRRR). Residues serine 16 and serine 21 each carry the phosphoserine modification. An O-linked (GlcNAc) serine glycan is attached at serine 132. Residue lysine 140 forms a Glycyl lysine isopeptide (Lys-Gly) (interchain with G-Cter in ubiquitin) linkage.

Belongs to the histone H2B family. As to quaternary structure, the nucleosome is a histone octamer containing two molecules each of H2A, H2B, H3 and H4 assembled in one H3-H4 heterotetramer and two H2A-H2B heterodimers. The octamer wraps approximately 147 bp of DNA. Monoubiquitination of Lys-140 gives a specific tag for epigenetic transcriptional activation and is also prerequisite for histone H3 'Lys-4' and 'Lys-79' methylation. In terms of processing, phosphorylated on SPKK motifs 3 and 4; which may regulate DNA binding. Dephosphorylated during maturation of spermatids to mature sperm and rephosphorylated at fertilization. Post-translationally, glcNAcylation at Ser-132 promotes monoubiquitination of Lys-140. It fluctuates in response to extracellular glucose, and associates with transcribed genes.

The protein localises to the nucleus. It localises to the chromosome. Its function is as follows. Core component of nucleosome. Nucleosomes wrap and compact DNA into chromatin, limiting DNA accessibility to the cellular machineries which require DNA as a template. Histones thereby play a central role in transcription regulation, DNA repair, DNA replication and chromosomal stability. DNA accessibility is regulated via a complex set of post-translational modifications of histones, also called histone code, and nucleosome remodeling. The protein is Histone H2B.1, sperm of Parechinus angulosus (Angulate sea urchin).